A 509-amino-acid polypeptide reads, in one-letter code: Transcription factor SOX-9 (509 aa).

2 disordered regions span residues 1-67 (MNLL…SEED) and 160-273 (RLRV…FRDV). The span at 30–41 (SAGSPCPSGSGS) shows a compositional bias: low complexity. The span at 42–52 (DTENTRPQENT) shows a compositional bias: polar residues. 2 stretches are compositionally biased toward basic and acidic residues: residues 56 to 67 (GEPDLKKESEED) and 160 to 174 (RLRV…DYKY). The segment at 63-103 (ESEEDKFPVCIREAVSQVLKGYDWTLVPMPVRVNGSSKNKP) is dimerization (DIM). The tract at residues 63-103 (ESEEDKFPVCIREAVSQVLKGYDWTLVPMPVRVNGSSKNKP) is PQA. A Phosphoserine modification is found at serine 64. A DNA-binding region (HMG box) is located at residues 105–173 (VKRPMNAFMV…QHKKDHPDYK (69 aa)). Serine 211 is subject to Phosphoserine. The interval 224–307 (PGEHSGQSQG…LPPNGHPGVP (84 aa)) is transactivation domain (TAM). 2 consecutive short sequence motifs (9aaTAD) follow at residues 275-284 (IGELSSDVIS) and 290-298 (DVNEFDQYL). The interval 330 to 415 (SAGHVWMSKQ…HYSEQQQHSP (86 aa)) is disordered. The span at 341-376 (APPPPPQQPPQAPPAPQAPPQPQAAPPQQPAAPPQQ) shows a compositional bias: pro residues. Positions 380–415 (HTLTTLSSEPGQSQRTHIKTEQLSPSHYSEQQQHSP) are enriched in polar residues. The tract at residues 394–509 (RTHIKTEQLS…QPVYTQLTRP (116 aa)) is transactivation domain (TAC). Lysine 398 is covalently cross-linked (Glycyl lysine isopeptide (Lys-Gly) (interchain with G-Cter in ubiquitin)). Positions 460–468 (TGLYSTFTY) match the 9aaTAD 3 motif. A disordered region spans residues 479–509 (PIADTSGVPSIPQTHSPQHWEQPVYTQLTRP). The span at 485-509 (GVPSIPQTHSPQHWEQPVYTQLTRP) shows a compositional bias: polar residues.

As to quaternary structure, homodimer; homodimerization is required for activity. Interacts (via C-terminus) with ZNF219; forming a complex that binds to the COL2A1 promoter and activates COL2A1 expression. Interacts with DDRGK1. Interacts with EP300/p300. Interacts with beta-catenin (CTNNB1); inhibiting CTNNB1 activity by competing with the binding sites of TCF/LEF within CTNNB1. Post-translationally, acetylated; acetylation impairs nuclear localization and ability to transactivate expression of target genes. Deacetylated by SIRT1. In terms of processing, phosphorylation at Ser-64 and Ser-211 by PKA increases transcriptional activity and may help delay chondrocyte maturation downstream of PTHLH/PTHrP signaling. Phosphorylation at either Ser-64 or Ser-211 is required for sumoylation, but phosphorylation is not dependent on sumoylation. Phosphorylated on tyrosine residues; tyrosine dephosphorylation by PTPN11/SHP2 blocks SOX9 phosphorylation by PKA and subsequent SUMOylation. Ubiquitinated; ubiquitination leads to proteasomal degradation and is negatively regulated by DDRGK1. Post-translationally, sumoylated; phosphorylation at either Ser-64 or Ser-211 is required for sumoylation. Sumoylation is induced by BMP signaling pathway.

It localises to the nucleus. Functionally, transcription factor that plays a key role in chondrocytes differentiation and skeletal development. Specifically binds the 5'-ACAAAG-3' DNA motif present in enhancers and super-enhancers and promotes expression of genes important for chondrogenesis, including cartilage matrix protein-coding genes COL2A1, COL4A2, COL9A1, COL11A2 and ACAN, SOX5 and SOX6. Also binds to some promoter regions. Plays a central role in successive steps of chondrocyte differentiation. Absolutely required for precartilaginous condensation, the first step in chondrogenesis during which skeletal progenitors differentiate into prechondrocytes. Together with SOX5 and SOX6, required for overt chondrogenesis when condensed prechondrocytes differentiate into early stage chondrocytes, the second step in chondrogenesis. Later, required to direct hypertrophic maturation and block osteoblast differentiation of growth plate chondrocytes: maintains chondrocyte columnar proliferation, delays prehypertrophy and then prevents osteoblastic differentiation of chondrocytes by lowering beta-catenin (CTNNB1) signaling and RUNX2 expression. Also required for chondrocyte hypertrophy, both indirectly, by keeping the lineage fate of chondrocytes, and directly, by remaining present in upper hypertrophic cells and transactivating COL10A1 along with MEF2C. Low lipid levels are the main nutritional determinant for chondrogenic commitment of skeletal progenitor cells: when lipids levels are low, FOXO (FOXO1 and FOXO3) transcription factors promote expression of SOX9, which induces chondrogenic commitment and suppresses fatty acid oxidation. Mechanistically, helps, but is not required, to remove epigenetic signatures of transcriptional repression and deposit active promoter and enhancer marks at chondrocyte-specific genes. Acts in cooperation with the Hedgehog pathway-dependent GLI (GLI1 and GLI3) transcription factors. In addition to cartilage development, also acts as a regulator of proliferation and differentiation in epithelial stem/progenitor cells: involved in the lung epithelium during branching morphogenesis, by balancing proliferation and differentiation and regulating the extracellular matrix. Controls epithelial branching during kidney development. The chain is Transcription factor SOX-9 from Homo sapiens (Human).